The chain runs to 352 residues: MKDERIVLALKSVAPGTPLREGLEQILRAKTGGLIVIGDTAKIMEVVEGGFAINTDYSPAYLYELAKMDGAIILSEDGKKILYANAQLVPDPAIPSSETGIRHRTAERVAKQTNALVIAISQRRSVITLYQGNFKYSLSEVSVILNKANQAIATLEKYRAVLDKTLMRLTNLEFDDMVTLLDVAKALQRVEMVLRIEREIERYIWELGSEGRLISMQLEELIANVEDEGLLIIQDYSLLGPEKTPEGILSLIRTWSSEDLLDYSLIVRALGYPGSASILDQPVSPRGYRILDKIPRLPVAVIENLVQTFGNLKNIMSASIEELDDVEGIGEVRARSIKEGLKKLREQTNYTL.

The DAC domain occupies 3–143 (DERIVLALKS…FKYSLSEVSV (141 aa)). Residues glycine 70, leucine 88, and 101–105 (IRHRT) contribute to the ATP site.

The protein belongs to the DisA family. As to quaternary structure, homooctamer. Requires Mg(2+) as cofactor.

It catalyses the reaction 2 ATP = 3',3'-c-di-AMP + 2 diphosphate. Its function is as follows. Participates in a DNA-damage check-point that is active prior to asymmetric division when DNA is damaged. DisA forms globular foci that rapidly scan along the chromosomes during sporulation, searching for lesions. When a lesion is present, DisA pauses at the lesion site. This triggers a cellular response that culminates in a temporary block in sporulation initiation. Also has diadenylate cyclase activity, catalyzing the condensation of 2 ATP molecules into cyclic di-AMP (c-di-AMP). c-di-AMP acts as a signaling molecule that couples DNA integrity with progression of sporulation. The rise in c-di-AMP level generated by DisA while scanning the chromosome, operates as a positive signal that advances sporulation; upon encountering a lesion, the DisA focus arrests at the damaged site and halts c-di-AMP synthesis. The polypeptide is DNA integrity scanning protein DisA (Carboxydothermus hydrogenoformans (strain ATCC BAA-161 / DSM 6008 / Z-2901)).